An 887-amino-acid polypeptide reads, in one-letter code: Transcriptional regulator DEF1 (887 aa).

Residues 1–13 (MERRQFNTSNIRN) show a composition bias toward polar residues. Disordered regions lie at residues 1–117 (MERR…IQPG), 203–293 (KRSL…ESNA), 311–330 (NNETNNTGESNSTSQQPRQL), 350–542 (PVLG…QQAQ), 555–578 (NRPPSQQRQYSQTPQYNQPPPQQK), 614–675 (QAPQ…QVPK), 696–758 (QRTL…TQEQ), and 813–887 (NNAN…NLLN). A compositionally biased stretch (low complexity) spans 57-75 (SSSQSNSVQNQDQSEDQSQ). Residues 76–107 (LPQQESNTQQESNTQQESNTPSPRASNTSTET) are compositionally biased toward polar residues. Positions 199 to 234 (EEMRKRSLENSRKRELEEAQEREESNKRQHTESSAE) form a coiled coil. Basic and acidic residues predominate over residues 203 to 231 (KRSLENSRKRELEEAQEREESNKRQHTES). Positions 232–254 (SAEPNAESSTESTTESNAESGAE) are enriched in low complexity. The span at 261–270 (AESTTESNVE) shows a compositional bias: polar residues. Residues 311–326 (NNETNNTGESNSTSQQ) show a composition bias toward low complexity. The segment covering 364–393 (KTSLTGSQNKVHSTNTQQSQKHPQQILTNS) has biased composition (polar residues). Low complexity-rich tracts occupy residues 399 to 408 (QQYSAQSQQQ), 428 to 456 (QQQQKQPSVPTSSVPLQVSQKQNQQQQEL), 475 to 519 (QQQS…QVQT), and 526 to 542 (QPQTQLSQQQQQQQQAQ). A compositionally biased stretch (low complexity) spans 622–640 (YQHHYQQVQQRQNQQPYMQ). Positions 641–658 (SAPTYQQPHVQTPKSTRS) are enriched in polar residues. Basic and acidic residues predominate over residues 696-710 (QRTLDNGREPERLRT). Over residues 729-745 (RSKQSSNQKPVVKQQSS) the composition is skewed to polar residues. Residues 829–844 (TNTRGGRASTRSSGRP) show a composition bias toward low complexity. Over residues 865 to 887 (TDGSQSQNSGKASKISNIRNLLN) the composition is skewed to polar residues.

The protein localises to the nucleus. Its function is as follows. Transcriptional regulator involved in extension of germ tubes into elongated hyphae and maintenance of filamentous growth. Regulates expression of UME6. Acts in a pathway that regulates maintenance of hyphal growth by repressing hyphal-to-yeast transition and allows dissemination within host epithelial tissues. Dispensable for invasion into both host oral epithelial cells and enterocytes, but required for epithelial damage. This Candida albicans (strain SC5314 / ATCC MYA-2876) (Yeast) protein is Transcriptional regulator DEF1 (DEF1).